A 211-amino-acid chain; its full sequence is Molybdenum cofactor guanylyltransferase (211 aa).

Residues 12-14 (LAG), Lys-25, Asn-53, Asp-71, and Asp-101 contribute to the GTP site. Residue Asp-101 coordinates Mg(2+).

This sequence belongs to the MobA family. In terms of assembly, monomer. Requires Mg(2+) as cofactor.

It is found in the cytoplasm. The catalysed reaction is Mo-molybdopterin + GTP + H(+) = Mo-molybdopterin guanine dinucleotide + diphosphate. In terms of biological role, transfers a GMP moiety from GTP to Mo-molybdopterin (Mo-MPT) cofactor (Moco or molybdenum cofactor) to form Mo-molybdopterin guanine dinucleotide (Mo-MGD) cofactor. In Acidovorax ebreus (strain TPSY) (Diaphorobacter sp. (strain TPSY)), this protein is Molybdenum cofactor guanylyltransferase.